A 368-amino-acid polypeptide reads, in one-letter code: Peptide chain release factor 2 (368 aa).

The residue at position 251 (glutamine 251) is an N5-methylglutamine.

This sequence belongs to the prokaryotic/mitochondrial release factor family. Post-translationally, methylated by PrmC. Methylation increases the termination efficiency of RF2.

It is found in the cytoplasm. In terms of biological role, peptide chain release factor 2 directs the termination of translation in response to the peptide chain termination codons UGA and UAA. This is Peptide chain release factor 2 from Nitratiruptor sp. (strain SB155-2).